Here is a 278-residue protein sequence, read N- to C-terminus: 4-hydroxy-3-methylbut-2-enyl diphosphate reductase (278 aa).

Cys12 is a binding site for [4Fe-4S] cluster. (2E)-4-hydroxy-3-methylbut-2-enyl diphosphate is bound by residues His40 and His75. Dimethylallyl diphosphate contacts are provided by His40 and His75. The isopentenyl diphosphate site is built by His40 and His75. Residue Cys97 participates in [4Fe-4S] cluster binding. His125 lines the (2E)-4-hydroxy-3-methylbut-2-enyl diphosphate pocket. His125 lines the dimethylallyl diphosphate pocket. Isopentenyl diphosphate is bound at residue His125. The active-site Proton donor is the Glu127. Thr157 lines the (2E)-4-hydroxy-3-methylbut-2-enyl diphosphate pocket. Cys187 is a binding site for [4Fe-4S] cluster. 4 residues coordinate (2E)-4-hydroxy-3-methylbut-2-enyl diphosphate: Ser215, Ser216, Asn217, and Ser258. Positions 215, 216, 217, and 258 each coordinate dimethylallyl diphosphate. Positions 215, 216, 217, and 258 each coordinate isopentenyl diphosphate.

It belongs to the IspH family. It depends on [4Fe-4S] cluster as a cofactor.

The catalysed reaction is isopentenyl diphosphate + 2 oxidized [2Fe-2S]-[ferredoxin] + H2O = (2E)-4-hydroxy-3-methylbut-2-enyl diphosphate + 2 reduced [2Fe-2S]-[ferredoxin] + 2 H(+). It catalyses the reaction dimethylallyl diphosphate + 2 oxidized [2Fe-2S]-[ferredoxin] + H2O = (2E)-4-hydroxy-3-methylbut-2-enyl diphosphate + 2 reduced [2Fe-2S]-[ferredoxin] + 2 H(+). Its pathway is isoprenoid biosynthesis; dimethylallyl diphosphate biosynthesis; dimethylallyl diphosphate from (2E)-4-hydroxy-3-methylbutenyl diphosphate: step 1/1. The protein operates within isoprenoid biosynthesis; isopentenyl diphosphate biosynthesis via DXP pathway; isopentenyl diphosphate from 1-deoxy-D-xylulose 5-phosphate: step 6/6. Its function is as follows. Catalyzes the conversion of 1-hydroxy-2-methyl-2-(E)-butenyl 4-diphosphate (HMBPP) into a mixture of isopentenyl diphosphate (IPP) and dimethylallyl diphosphate (DMAPP). Acts in the terminal step of the DOXP/MEP pathway for isoprenoid precursor biosynthesis. The chain is 4-hydroxy-3-methylbut-2-enyl diphosphate reductase from Pseudothermotoga lettingae (strain ATCC BAA-301 / DSM 14385 / NBRC 107922 / TMO) (Thermotoga lettingae).